We begin with the raw amino-acid sequence, 251 residues long: Triosephosphate isomerase (251 aa).

12-14 (NWK) is a substrate binding site. Histidine 99 acts as the Electrophile in catalysis. Catalysis depends on glutamate 169, which acts as the Proton acceptor. Substrate contacts are provided by residues glycine 175, serine 214, and 235–236 (GG).

Belongs to the triosephosphate isomerase family. As to quaternary structure, homodimer.

The protein resides in the cytoplasm. It carries out the reaction D-glyceraldehyde 3-phosphate = dihydroxyacetone phosphate. The protein operates within carbohydrate biosynthesis; gluconeogenesis. It participates in carbohydrate degradation; glycolysis; D-glyceraldehyde 3-phosphate from glycerone phosphate: step 1/1. In terms of biological role, involved in the gluconeogenesis. Catalyzes stereospecifically the conversion of dihydroxyacetone phosphate (DHAP) to D-glyceraldehyde-3-phosphate (G3P). The protein is Triosephosphate isomerase of Bradyrhizobium sp. (strain ORS 278).